Consider the following 184-residue polypeptide: MTVEVGADENPDFAHDETDGAGDESDDEDAQGRDPELDLAVQYGDEIGDAQRKSLPKRKVIAEWLEPAIFSDTQFTVRFVGADEGRALNHSYRHKDYATNVLTFAYGEEPDGVTVADLVLCCPVVEKEAREQGKTLVAHYAHLLVHGALHAQGYDHERGEEDAAEMEALEIDILAKLGFPNPYR.

Composition is skewed to acidic residues over residues 1 to 11 and 19 to 29; these read MTVEVGADENP and DGAGDESDDED. The interval 1 to 37 is disordered; it reads MTVEVGADENPDFAHDETDGAGDESDDEDAQGRDPEL. Zn(2+)-binding residues include histidine 146, histidine 150, and histidine 156.

It belongs to the endoribonuclease YbeY family. Zn(2+) serves as cofactor.

It is found in the cytoplasm. Its function is as follows. Single strand-specific metallo-endoribonuclease involved in late-stage 70S ribosome quality control and in maturation of the 3' terminus of the 16S rRNA. The chain is Endoribonuclease YbeY from Burkholderia mallei (strain ATCC 23344).